The sequence spans 336 residues: Holliday junction branch migration complex subunit RuvB (336 aa).

A large ATPase domain (RuvB-L) region spans residues 1-182 (MKERIVNLET…FGMSFRMQFY (182 aa)). Residues leucine 21, arginine 22, glycine 63, lysine 66, threonine 67, serine 68, 129–131 (EDF), arginine 172, tyrosine 182, and arginine 219 contribute to the ATP site. Threonine 67 is a Mg(2+) binding site. A small ATPAse domain (RuvB-S) region spans residues 183 to 253 (SPSELALIIK…ITLHALNELG (71 aa)). A head domain (RuvB-H) region spans residues 256 to 336 (ELGFDEADLA…IPTLKSQSLF (81 aa)). Arginine 310 and arginine 315 together coordinate DNA.

This sequence belongs to the RuvB family. Homohexamer. Forms an RuvA(8)-RuvB(12)-Holliday junction (HJ) complex. HJ DNA is sandwiched between 2 RuvA tetramers; dsDNA enters through RuvA and exits via RuvB. An RuvB hexamer assembles on each DNA strand where it exits the tetramer. Each RuvB hexamer is contacted by two RuvA subunits (via domain III) on 2 adjacent RuvB subunits; this complex drives branch migration. In the full resolvosome a probable DNA-RuvA(4)-RuvB(12)-RuvC(2) complex forms which resolves the HJ.

The protein resides in the cytoplasm. It carries out the reaction ATP + H2O = ADP + phosphate + H(+). Its function is as follows. The RuvA-RuvB-RuvC complex processes Holliday junction (HJ) DNA during genetic recombination and DNA repair, while the RuvA-RuvB complex plays an important role in the rescue of blocked DNA replication forks via replication fork reversal (RFR). RuvA specifically binds to HJ cruciform DNA, conferring on it an open structure. The RuvB hexamer acts as an ATP-dependent pump, pulling dsDNA into and through the RuvAB complex. RuvB forms 2 homohexamers on either side of HJ DNA bound by 1 or 2 RuvA tetramers; 4 subunits per hexamer contact DNA at a time. Coordinated motions by a converter formed by DNA-disengaged RuvB subunits stimulates ATP hydrolysis and nucleotide exchange. Immobilization of the converter enables RuvB to convert the ATP-contained energy into a lever motion, pulling 2 nucleotides of DNA out of the RuvA tetramer per ATP hydrolyzed, thus driving DNA branch migration. The RuvB motors rotate together with the DNA substrate, which together with the progressing nucleotide cycle form the mechanistic basis for DNA recombination by continuous HJ branch migration. Branch migration allows RuvC to scan DNA until it finds its consensus sequence, where it cleaves and resolves cruciform DNA. The protein is Holliday junction branch migration complex subunit RuvB of Helicobacter acinonychis (strain Sheeba).